Reading from the N-terminus, the 170-residue chain is Ecotin (170 aa).

An N-terminal signal peptide occupies residues 1–21; sequence MNKASVVFSGLLMAVSASAIA. The cysteines at positions 78 and 115 are disulfide-linked.

The protein belongs to the protease inhibitor I11 (ecotin) family. In terms of assembly, homodimer.

The protein localises to the periplasm. Functionally, general inhibitor of pancreatic serine proteases: inhibits chymotrypsin, trypsin, elastases, factor X, kallikrein as well as a variety of other proteases. This chain is Ecotin, found in Serratia proteamaculans (strain 568).